Here is a 386-residue protein sequence, read N- to C-terminus: 3-hydroxyisobutyryl-CoA hydrolase, mitochondrial (386 aa).

Residues 1 to 32 (MGLQGLCRLMSRFNSYKRTNIILQHLKMSNHT) constitute a mitochondrion transit peptide. At K92 the chain carries N6-acetyllysine; alternate. At K92 the chain carries N6-succinyllysine; alternate. E121, G146, E169, and D177 together coordinate substrate. K221 carries the post-translational modification N6-acetyllysine; alternate. At K221 the chain carries N6-succinyllysine; alternate. S234 is modified (phosphoserine). N6-succinyllysine is present on residues K250 and K257. Position 297 is an N6-acetyllysine; alternate (K297). K297 carries the N6-succinyllysine; alternate modification. Residue K301 is modified to N6-succinyllysine. The residue at position 353 (K353) is an N6-acetyllysine; alternate. N6-succinyllysine; alternate is present on K353. A Phosphoserine modification is found at S356. N6-acetyllysine occurs at positions 360 and 365. Residue K377 is modified to N6-succinyllysine.

The protein belongs to the enoyl-CoA hydratase/isomerase family.

The protein resides in the mitochondrion. The enzyme catalyses 3-hydroxy-2-methylpropanoyl-CoA + H2O = 3-hydroxy-2-methylpropanoate + CoA + H(+). It participates in amino-acid degradation; L-valine degradation. In terms of biological role, hydrolyzes 3-hydroxyisobutyryl-CoA (HIBYL-CoA), a saline catabolite. Has high activity toward isobutyryl-CoA. Could be an isobutyryl-CoA dehydrogenase that functions in valine catabolism. Also hydrolyzes 3-hydroxypropanoyl-CoA. This Bos taurus (Bovine) protein is 3-hydroxyisobutyryl-CoA hydrolase, mitochondrial (HIBCH).